Reading from the N-terminus, the 373-residue chain is Histidinol-phosphate aminotransferase (373 aa).

Lys233 is subject to N6-(pyridoxal phosphate)lysine.

The protein belongs to the class-II pyridoxal-phosphate-dependent aminotransferase family. Histidinol-phosphate aminotransferase subfamily. As to quaternary structure, homodimer. It depends on pyridoxal 5'-phosphate as a cofactor.

It catalyses the reaction L-histidinol phosphate + 2-oxoglutarate = 3-(imidazol-4-yl)-2-oxopropyl phosphate + L-glutamate. The protein operates within amino-acid biosynthesis; L-histidine biosynthesis; L-histidine from 5-phospho-alpha-D-ribose 1-diphosphate: step 7/9. In Nitratidesulfovibrio vulgaris (strain ATCC 29579 / DSM 644 / CCUG 34227 / NCIMB 8303 / VKM B-1760 / Hildenborough) (Desulfovibrio vulgaris), this protein is Histidinol-phosphate aminotransferase.